We begin with the raw amino-acid sequence, 246 residues long: Sulfate transporter CysZ (246 aa).

Transmembrane regions (helical) follow at residues 24 to 44, 69 to 89, 148 to 168, and 214 to 234; these read LFVLIPLTLNLLVFALLIGFA, IVWPLFVLLVLVIVFFTFTMV, LLVLSFVPGVNLIATPLWILF, and LLIPLVNLVMMPAAVAGATLF.

The protein belongs to the CysZ family.

The protein resides in the cell inner membrane. In terms of biological role, high affinity, high specificity proton-dependent sulfate transporter, which mediates sulfate uptake. Provides the sulfur source for the cysteine synthesis pathway. The polypeptide is Sulfate transporter CysZ (Pseudomonas aeruginosa (strain LESB58)).